The following is a 106-amino-acid chain: Iron-sulfur cluster assembly protein CyaY (106 aa).

It belongs to the frataxin family.

Its function is as follows. Involved in iron-sulfur (Fe-S) cluster assembly. May act as a regulator of Fe-S biogenesis. The protein is Iron-sulfur cluster assembly protein CyaY of Salmonella schwarzengrund (strain CVM19633).